A 219-amino-acid chain; its full sequence is PKHD-type hydroxylase AM1_3707 (219 aa).

In terms of domain architecture, Fe2OG dioxygenase spans 78-172 (SIHTLLFSRY…RLVAVGWVQS (95 aa)). Positions 96, 98, and 153 each coordinate Fe cation. Arg-163 contacts 2-oxoglutarate.

Fe(2+) serves as cofactor. L-ascorbate is required as a cofactor.

The protein is PKHD-type hydroxylase AM1_3707 of Acaryochloris marina (strain MBIC 11017).